The primary structure comprises 490 residues: 5'-3' exonuclease PLD3 (490 aa).

The Cytoplasmic segment spans residues M1 to W38. A helical; Signal-anchor for type II membrane protein transmembrane segment spans residues V39–L59. Residues W60–L490 are Lumenal-facing. 2 cysteine pairs are disulfide-bonded: C77–C239 and C81–C237. N97 and N132 each carry an N-linked (GlcNAc...) asparagine glycan. A PLD phosphodiesterase 1 domain is found at T196–S223. Active-site residues include H201, K203, and D208. Residue H201 is the Proton donor of the active site. Residues H201 and K203 each contribute to the phosphate site. N218 lines the phosphate pocket. N-linked (GlcNAc...) asparagine glycosylation is found at N236, N284, and N387. An intrachain disulfide couples C366 to C487. In terms of domain architecture, PLD phosphodiesterase 2 spans Y411 to Y437. Position 416 (H416) interacts with phosphate. Catalysis depends on H416, which acts as the Nucleophile. F438 contacts Mg(2+).

It belongs to the phospholipase D family. As to quaternary structure, homodimer. Interacts with APP. Post-translationally, N-glycosylated. Proteolytically processed to a soluble form that is stable within endosomes and lysosomes. During transport through the secretory pathway becomes proteolysed by cysteine proteases, thereby releasing a stable soluble lysosomal lumenal polypeptide, whereas the transmembrane-bound fragment is rapidly degraded. Its transport route to lysosomes involves ubiquitination and the ESCRT complex. In terms of processing, ubiquitinated. Ubiquitination mediates sorting into lysosomes.

It is found in the endoplasmic reticulum membrane. The protein localises to the lysosome lumen. It localises to the early endosome membrane. The protein resides in the late endosome membrane. Its subcellular location is the golgi apparatus membrane. It is found in the endosome membrane. It catalyses the reaction Exonucleolytic cleavage in the 5'- to 3'-direction to yield nucleoside 3'-phosphates.. The enzyme catalyses a 5'-end 5'-dephospho-ribonucleotidyl-ribonucleotide-RNA + H2O = a ribonucleoside 3'-phosphate + a 5'-end dephospho-ribonucleoside-RNA + H(+). It carries out the reaction a ribonucleoside 3'-phosphate-2'-3'-cyclophospho-GMP + H2O = a ribonucleoside 3'-phosphate + 2',3'-cyclophospho-GMP + H(+). The catalysed reaction is a 5'-end 5'-dephospho-2'-deoxyribonucleotidyl-2'-deoxyribonucleotide in single-stranded DNA + H2O = a 5'-end dephospho-2'-deoxyribonucleoside in single-stranded DNA + a 2'-deoxyribonucleoside 3'-phosphate + H(+). It catalyses the reaction a 5'-end 5'-phospho-2'-deoxyribonucleotide in single-stranded DNA + H2O = a 5'-end 5'-dephospho-2'-deoxyribonucleotide in single-stranded DNA + phosphate. The enzyme catalyses a 3-lyso-sn-glycero-1-phospho-(3'-acyl-1'-sn-glycerol) + a 1-acyl-sn-glycerol = a 3-acyl-sn-glycero-1-phospho-(3'-acyl-1'-sn-glycerol) + glycerol. It carries out the reaction 3-lyso-sn-glycero-1-phospho-(3'-(9Z-octadecenoyl)-1'-sn-glycerol) + 1-(9Z-octadecenoyl)-sn-glycerol = 3-(9Z-octadecenoyl)-sn-glycero-1-phospho-(3'-(9Z-octadecenoyl)-1'-sn-glycerol) + glycerol. In terms of biological role, 5'-&gt;3' exonuclease that hydrolyzes the phosphodiester bond of single-stranded DNA (ssDNA) and RNA molecules to form nucleoside 3'-monophosphates and 5'-end 5'-hydroxy deoxyribonucleotide/ribonucleotide fragments. Partially redundant with PLD4, can cleave all four nucleotides displaying higher efficiency for ssDNA and RNA fragments initiated with uridine and guanosine residues and lower efficiency for cytidine-initiated substrates. As a result, it does not always degrade polynucleotides to the single nucleotide level, it can stall at specific sites sparing certain fragments from exonucleolytic degradation. Processes self and pathogenic ssDNA and RNA molecules that reach the endolysosomal compartment via phagocytosis or autophagy and may serve as 'danger' signals for recognition by innate immune receptors such as toll-like receptors (TLRs). Degrades mitochondrial CpG-rich ssDNA fragments to prevent TLR9 activation and autoinflammatory response, but it can cleave viral RNA to generate ligands for TLR7 activation and initiate antiviral immune responses. In plasmacytoid dendritic cells, it cooperates with endonuclease RNASET2 to release 2',3'-cyclic guanosine monophosphate (2',3'-cGMP), a potent stimulatory ligand for TLR7. Produces 2',3'-cGMPs and cytidine-rich RNA fragments that occupy TLR7 ligand-binding pockets and trigger a signaling-competent state. Can exert polynucleotide phosphatase activity toward 5'-phosphorylated ssDNA substrates although at a slow rate. Transphosphatidylase that catalyzes the exchange with R to S stereo-inversion of the glycerol moiety between (S,R)-lysophosphatidylglycerol (LPG) and monoacylglycerol (MAG) substrates to yield (S,S)-bis(monoacylglycero)phosphate (BMP). Can synthesize a variety of (S,S)-BMPs representing the main phospholipid constituent of lysosomal intralumenal vesicle (ILV) membranes that bind acid hydrolases for lipid degradation. Regulates the homeostasis and interorganellar communication of the endolysosomal system with an overall impact on cellular removal of dysfunctional organelles via autophagy as well as proper protein and lipid turnover. May play a role in myotube formation in response to ER stress. The protein is 5'-3' exonuclease PLD3 (PLD3) of Pongo abelii (Sumatran orangutan).